The chain runs to 358 residues: Mesaconyl-CoA hydratase (358 aa).

The MaoC-like domain occupies 44-148 (AHDPGLRLTH…TSSSRPQYGI (105 aa)).

This sequence belongs to the enoyl-CoA hydratase/isomerase family.

It carries out the reaction (2R,3S)-beta-methylmalyl-CoA = 2-methylfumaryl-CoA + H2O. Its function is as follows. Involved in the methylaspartate cycle. Catalyzes the reversible hydration of mesaconyl-CoA (2-methylfumaryl-CoA) to yield beta-methylmalyl-CoA ((2R,3S)-beta-methylmalyl-CoA). This Haloarcula marismortui (strain ATCC 43049 / DSM 3752 / JCM 8966 / VKM B-1809) (Halobacterium marismortui) protein is Mesaconyl-CoA hydratase.